Consider the following 97-residue polypeptide: UPF0473 protein Exig_2070 (97 aa).

This sequence belongs to the UPF0473 family.

The sequence is that of UPF0473 protein Exig_2070 from Exiguobacterium sibiricum (strain DSM 17290 / CCUG 55495 / CIP 109462 / JCM 13490 / 255-15).